Consider the following 104-residue polypeptide: uncharacterized protein (104 aa).

Positions M1–A25 are cleaved as a signal peptide. A helical membrane pass occupies residues I79–L99.

The protein resides in the membrane. This is an uncharacterized protein from Saccharomyces cerevisiae (strain ATCC 204508 / S288c) (Baker's yeast).